The sequence spans 381 residues: Probable cyclic AMP-AMP-GMP nucleotide synthase (381 aa).

The GTP site is built by Ser-53 and Arg-56. Residues Asp-69 and Asp-71 contribute to the active site. Positions 69 and 71 each coordinate Mg(2+). GTP is bound at residue Arg-109. Asp-121 is an active-site residue. Residues Asp-121 and Asp-196 each contribute to the Mg(2+) site. Arg-197, Arg-204, Thr-205, Gln-210, and Arg-307 together coordinate GTP. The disordered stretch occupies residues 348-381 (GTKFPFPGPQGGDRSGGFTAPTQPAEPQKTGRFA).

This sequence belongs to the CD-NTase family. D02 subfamily. Requires Mg(2+) as cofactor.

The catalysed reaction is GTP + 2 ATP = 3',3',3'-cAAG + 3 diphosphate. Cyclic nucleotide synthase (second messenger synthase) of a CBASS antivirus system. CBASS (cyclic oligonucleotide-based antiphage signaling system) provides immunity against bacteriophage. The CD-NTase protein synthesizes cyclic nucleotides in response to infection; these serve as specific second messenger signals. The signals activate a diverse range of effectors, leading to bacterial cell death and thus abortive phage infection. In terms of biological role, cyclic nucleotide synthase, synthesizes a tricyclic nucleotide with AMP and GMP moieties, probably 3',3',3'-cyclic AMP-AMP-GMP (3'3'3'-cAAG). Controls the activity of the associated CBASS effector protein. In Salmonella paratyphi B (Salmonella enterica subsp. enterica serovar Paratyphi B), this protein is Probable cyclic AMP-AMP-GMP nucleotide synthase.